We begin with the raw amino-acid sequence, 626 residues long: tRNA 5-methylaminomethyl-2-thiouridine biosynthesis bifunctional protein MnmC (626 aa).

Residues 1–237 (MKGPQLDYAD…KRDMTVGVFQ (237 aa)) are tRNA (mnm(5)s(2)U34)-methyltransferase. An FAD-dependent cmnm(5)s(2)U34 oxidoreductase region spans residues 255-626 (IGSGLSGANV…RVLPNRFSQE (372 aa)).

It in the N-terminal section; belongs to the methyltransferase superfamily. tRNA (mnm(5)s(2)U34)-methyltransferase family. The protein in the C-terminal section; belongs to the DAO family. FAD is required as a cofactor.

The protein localises to the cytoplasm. It carries out the reaction 5-aminomethyl-2-thiouridine(34) in tRNA + S-adenosyl-L-methionine = 5-methylaminomethyl-2-thiouridine(34) in tRNA + S-adenosyl-L-homocysteine + H(+). In terms of biological role, catalyzes the last two steps in the biosynthesis of 5-methylaminomethyl-2-thiouridine (mnm(5)s(2)U) at the wobble position (U34) in tRNA. Catalyzes the FAD-dependent demodification of cmnm(5)s(2)U34 to nm(5)s(2)U34, followed by the transfer of a methyl group from S-adenosyl-L-methionine to nm(5)s(2)U34, to form mnm(5)s(2)U34. The polypeptide is tRNA 5-methylaminomethyl-2-thiouridine biosynthesis bifunctional protein MnmC (Hahella chejuensis (strain KCTC 2396)).